A 160-amino-acid chain; its full sequence is Large ribosomal subunit protein uL11 (160 aa).

Belongs to the universal ribosomal protein uL11 family. Part of the ribosomal stalk of the 50S ribosomal subunit. Interacts with L10 and the large rRNA to form the base of the stalk. L10 forms an elongated spine to which L12 dimers bind in a sequential fashion forming a multimeric L10(L12)X complex.

Functionally, forms part of the ribosomal stalk which helps the ribosome interact with GTP-bound translation factors. This Methanothermobacter thermautotrophicus (strain ATCC 29096 / DSM 1053 / JCM 10044 / NBRC 100330 / Delta H) (Methanobacterium thermoautotrophicum) protein is Large ribosomal subunit protein uL11.